The sequence spans 885 residues: Phycobiliprotein ApcE (885 aa).

Cysteine 185 contributes to the (2R,3E)-phycocyanobilin binding site. PBS-linker domains are found at residues 242-422 (DVQG…FRKV), 498-680 (KSIG…NSKK), and 694-871 (NSIQ…KQSS).

This sequence belongs to the phycobilisome linker protein family. Contains one covalently linked bilin chromophore. This protein autochromophorylates (Potential).

The protein resides in the plastid. It localises to the chloroplast thylakoid membrane. Functionally, this protein is postulated to act both as terminal energy acceptor and as a linker polypeptide that stabilizes the phycobilisome architecture. May have intrinsic bilin lyase activity. The sequence is that of Phycobiliprotein ApcE (apcE) from Aglaothamnion neglectum (Red alga).